We begin with the raw amino-acid sequence, 119 residues long: Beta-2-microglobulin (119 aa).

The signal sequence occupies residues 1–20 (MARSVVAALLVLLSLSGLEA). The Ig-like C1-type domain occupies 25-114 (PKIQVYSRHP…VTFPTPKTVK (90 aa)). Cysteines 45 and 100 form a disulfide.

It belongs to the beta-2-microglobulin family. In terms of assembly, heterodimer of an alpha chain and a beta chain. Beta-2-microglobulin is the beta-chain of major histocompatibility complex class I molecules.

Its subcellular location is the secreted. Its function is as follows. Component of the class I major histocompatibility complex (MHC). Involved in the presentation of peptide antigens to the immune system. This Saimiri boliviensis boliviensis (Bolivian squirrel monkey) protein is Beta-2-microglobulin (B2M).